A 412-amino-acid polypeptide reads, in one-letter code: 8-amino-7-oxononanoate synthase (412 aa).

G106–Y107 provides a ligand contact to pyridoxal 5'-phosphate. H131 is a substrate binding site. Residues S187, H219, and T247 each coordinate pyridoxal 5'-phosphate. K250 is subject to N6-(pyridoxal phosphate)lysine. T370 lines the substrate pocket.

Belongs to the class-II pyridoxal-phosphate-dependent aminotransferase family. BioF subfamily. In terms of assembly, homodimer. Pyridoxal 5'-phosphate serves as cofactor.

It catalyses the reaction 6-carboxyhexanoyl-[ACP] + L-alanine + H(+) = (8S)-8-amino-7-oxononanoate + holo-[ACP] + CO2. The protein operates within cofactor biosynthesis; biotin biosynthesis. 8-amino-7-oxononanoate synthase; part of the cluster involved in the biosynthesis of biotin (also known as vitamin B8 or vitamin H), a water-soluble vitamin that functions as a prosthetic group of many carboxylases, such as acetyl-CoA carboxylase and pyruvate carboxylase. Catalyzes the decarboxylative condensation of pimeloyl-[acyl-carrier protein] and L-alanine to produce 8-amino-7-oxononanoate (AON). The protein is 8-amino-7-oxononanoate synthase of Emericella nidulans (strain FGSC A4 / ATCC 38163 / CBS 112.46 / NRRL 194 / M139) (Aspergillus nidulans).